Consider the following 351-residue polypeptide: Phosphate acyltransferase (351 aa).

The protein belongs to the PlsX family. As to quaternary structure, homodimer. Probably interacts with PlsY.

It localises to the cytoplasm. It catalyses the reaction a fatty acyl-[ACP] + phosphate = an acyl phosphate + holo-[ACP]. It functions in the pathway lipid metabolism; phospholipid metabolism. Catalyzes the reversible formation of acyl-phosphate (acyl-PO(4)) from acyl-[acyl-carrier-protein] (acyl-ACP). This enzyme utilizes acyl-ACP as fatty acyl donor, but not acyl-CoA. This chain is Phosphate acyltransferase, found in Neisseria meningitidis serogroup C / serotype 2a (strain ATCC 700532 / DSM 15464 / FAM18).